A 147-amino-acid polypeptide reads, in one-letter code: Phosphoribosyl-AMP cyclohydrolase (147 aa).

Residue aspartate 97 participates in Mg(2+) binding. Cysteine 98 provides a ligand contact to Zn(2+). Mg(2+) is bound by residues aspartate 99 and aspartate 101. 2 residues coordinate Zn(2+): cysteine 114 and cysteine 121.

This sequence belongs to the PRA-CH family. In terms of assembly, homodimer. It depends on Mg(2+) as a cofactor. The cofactor is Zn(2+).

The protein resides in the cytoplasm. It carries out the reaction 1-(5-phospho-beta-D-ribosyl)-5'-AMP + H2O = 1-(5-phospho-beta-D-ribosyl)-5-[(5-phospho-beta-D-ribosylamino)methylideneamino]imidazole-4-carboxamide. The protein operates within amino-acid biosynthesis; L-histidine biosynthesis; L-histidine from 5-phospho-alpha-D-ribose 1-diphosphate: step 3/9. Functionally, catalyzes the hydrolysis of the adenine ring of phosphoribosyl-AMP. This chain is Phosphoribosyl-AMP cyclohydrolase, found in Hydrogenovibrio crunogenus (strain DSM 25203 / XCL-2) (Thiomicrospira crunogena).